Here is a 349-residue protein sequence, read N- to C-terminus: N-acetyltaurine hydrolase (349 aa).

Residues His-26, His-28, Glu-169, His-201, His-230, and Asp-298 each coordinate a divalent metal cation.

It belongs to the metallo-dependent hydrolases superfamily. Phosphotriesterase family. The cofactor is a divalent metal cation.

The protein localises to the cytoplasm. It is found in the cytosol. The enzyme catalyses N-acetyltaurine + H2O = taurine + acetate. It catalyses the reaction N-propanoyltaurine + H2O = propanoate + taurine. The catalysed reaction is N-acetyl-L-methionine + H2O = L-methionine + acetate. It carries out the reaction N-acetyl-L-isoleucine + H2O = L-isoleucine + acetate. The enzyme catalyses N-acetyl-L-leucine + H2O = L-leucine + acetate. It catalyses the reaction N-acetyl-L-valine + H2O = L-valine + acetate. In terms of biological role, N-acetyltaurine hydrolase that catalyzes the hydrolysis of N-acetyltaurine into taurine and acetate. PTER also acts on other N-acetyl amino acids (Met, Ile, Leu, Val) and N-propionyltaurine, but at lower rates. The chain is N-acetyltaurine hydrolase (pter) from Tetraodon nigroviridis (Spotted green pufferfish).